Here is a 504-residue protein sequence, read N- to C-terminus: Maturase K (504 aa).

It belongs to the intron maturase 2 family. MatK subfamily.

Its subcellular location is the plastid. It is found in the chloroplast. Functionally, usually encoded in the trnK tRNA gene intron. Probably assists in splicing its own and other chloroplast group II introns. In Nepenthes gracilis (Slender pitcher plant), this protein is Maturase K.